Consider the following 376-residue polypeptide: DNA methyltransferase CcrM (376 aa).

An RAMA domain is found at 273-370; that stretch reads KATLSVMTGK…IDELRSVIRN (98 aa).

Belongs to the N(4)/N(6)-methyltransferase family.

It carries out the reaction a 2'-deoxyadenosine in DNA + S-adenosyl-L-methionine = an N(6)-methyl-2'-deoxyadenosine in DNA + S-adenosyl-L-homocysteine + H(+). A beta subtype methylase that recognizes the double-stranded sequence 5'-GANTC-3' and methylates A-2 on both strands. Overexpression leads to many branched and bloated cells, two to three times the size of wild-type cells, and cells that have 1-3 times the normal amount of DNA. Contributes to the accurate cell-cycle control of DNA replication and cellular morphology. Can fully replace its ortholog in C.crescentus. The protein is DNA methyltransferase CcrM (smeIM) of Rhizobium meliloti (strain 1021) (Ensifer meliloti).